The primary structure comprises 698 residues: Transferrin-binding protein B (698 aa).

Residues 1 to 20 form the signal peptide; sequence MNNPLVNQAAMVLPVFLLSA. Residue Cys-21 is the site of N-palmitoyl cysteine attachment. Cys-21 is lipidated: S-diacylglycerol cysteine. Disordered regions lie at residues 33 to 58, 83 to 102, 294 to 324, 349 to 383, 428 to 479, and 669 to 698; these read VDTE…QKDQ, IKLS…KNPS, FSGK…SLSG, GSAK…SENS, ESGK…GDAN, and TKNA…KPVQ. Polar residues predominate over residues 46-56; the sequence is DVSSEKPQAQK. A compositionally biased stretch (basic and acidic residues) spans 299-315; the sequence is EATDKPKNDGETKEHPF. Residues 369-383 show a composition bias toward low complexity; the sequence is AAASNGAAGTSSENS. Polar residues predominate over residues 460–476; that stretch reads QAGTAENGNPAASNTAG. Positions 671 to 686 are enriched in low complexity; the sequence is NATDASGNGNSASSAT.

It belongs to the TbpB family. In terms of assembly, binds only human holo-transferrin (TF), via the TF C-terminus. Forms a large complex with TbpA and TF. Interacts via its C-terminal domain with Slam1.

The protein resides in the cell outer membrane. It localises to the cell surface. In terms of biological role, neisseria acquires iron by extracting it from serum transferrin (TF) in its human host. Acts as a TF receptor and is required for TF utilization. Involved in the initial capture of TF. Helps select only those TF molecules that can be used as an iron source and concentrates them on the cell surface, maintaining the iron-loaded status of the TF C-terminal lobe until its delivery to TbpA. This is Transferrin-binding protein B from Neisseria meningitidis serogroup A / serotype 4A (strain DSM 15465 / Z2491).